The following is a 257-amino-acid chain: Deoxyribose-phosphate aldolase (257 aa).

Asp-102 acts as the Proton donor/acceptor in catalysis. The active-site Schiff-base intermediate with acetaldehyde is the Lys-166. Lys-198 functions as the Proton donor/acceptor in the catalytic mechanism.

This sequence belongs to the DeoC/FbaB aldolase family. DeoC type 2 subfamily.

It is found in the cytoplasm. It carries out the reaction 2-deoxy-D-ribose 5-phosphate = D-glyceraldehyde 3-phosphate + acetaldehyde. It participates in carbohydrate degradation; 2-deoxy-D-ribose 1-phosphate degradation; D-glyceraldehyde 3-phosphate and acetaldehyde from 2-deoxy-alpha-D-ribose 1-phosphate: step 2/2. Catalyzes a reversible aldol reaction between acetaldehyde and D-glyceraldehyde 3-phosphate to generate 2-deoxy-D-ribose 5-phosphate. The polypeptide is Deoxyribose-phosphate aldolase (Shewanella sediminis (strain HAW-EB3)).